The sequence spans 232 residues: Orotidine 5'-phosphate decarboxylase (232 aa).

Substrate contacts are provided by residues Asp-13, Lys-35, 62–71 (DLKFHDIPNT), Thr-121, Arg-182, Gln-191, Gly-211, and Arg-212. Lys-64 (proton donor) is an active-site residue.

It belongs to the OMP decarboxylase family. Type 1 subfamily. Homodimer.

It carries out the reaction orotidine 5'-phosphate + H(+) = UMP + CO2. It functions in the pathway pyrimidine metabolism; UMP biosynthesis via de novo pathway; UMP from orotate: step 2/2. Its function is as follows. Catalyzes the decarboxylation of orotidine 5'-monophosphate (OMP) to uridine 5'-monophosphate (UMP). In Acinetobacter baumannii (strain AB0057), this protein is Orotidine 5'-phosphate decarboxylase.